The chain runs to 335 residues: 7,8-didemethyl-8-hydroxy-5-deazariboflavin synthase (335 aa).

The 246-residue stretch at 1-246 folds into the Radical SAM core domain; it reads MTYSKNVFIP…QVAPNLIDPK (246 aa). Residues Cys15, Cys19, and Cys22 each coordinate [4Fe-4S] cluster.

Belongs to the radical SAM superfamily. CofG family. In terms of assembly, consists of two subunits, CofG and CofH. The cofactor is [4Fe-4S] cluster.

It catalyses the reaction 5-amino-5-(4-hydroxybenzyl)-6-(D-ribitylimino)-5,6-dihydrouracil + S-adenosyl-L-methionine = 7,8-didemethyl-8-hydroxy-5-deazariboflavin + 5'-deoxyadenosine + L-methionine + NH4(+) + H(+). It participates in cofactor biosynthesis; coenzyme F0 biosynthesis. Its function is as follows. Catalyzes the radical-mediated synthesis of 7,8-didemethyl-8-hydroxy-5-deazariboflavin from 5-amino-5-(4-hydroxybenzyl)-6-(D-ribitylimino)-5,6-dihydrouracil. This chain is 7,8-didemethyl-8-hydroxy-5-deazariboflavin synthase, found in Methanosarcina mazei (strain ATCC BAA-159 / DSM 3647 / Goe1 / Go1 / JCM 11833 / OCM 88) (Methanosarcina frisia).